The following is a 615-amino-acid chain: 1-deoxy-D-xylulose-5-phosphate synthase (615 aa).

Residues His-76 and 117–119 (GHS) contribute to the thiamine diphosphate site. Asp-148 serves as a coordination point for Mg(2+). Thiamine diphosphate contacts are provided by residues 149 to 150 (GA), Asn-177, Tyr-284, and Glu-365. Asn-177 lines the Mg(2+) pocket.

This sequence belongs to the transketolase family. DXPS subfamily. In terms of assembly, homodimer. Requires Mg(2+) as cofactor. It depends on thiamine diphosphate as a cofactor.

The catalysed reaction is D-glyceraldehyde 3-phosphate + pyruvate + H(+) = 1-deoxy-D-xylulose 5-phosphate + CO2. It participates in metabolic intermediate biosynthesis; 1-deoxy-D-xylulose 5-phosphate biosynthesis; 1-deoxy-D-xylulose 5-phosphate from D-glyceraldehyde 3-phosphate and pyruvate: step 1/1. Its function is as follows. Catalyzes the acyloin condensation reaction between C atoms 2 and 3 of pyruvate and glyceraldehyde 3-phosphate to yield 1-deoxy-D-xylulose-5-phosphate (DXP). This is 1-deoxy-D-xylulose-5-phosphate synthase from Francisella tularensis subsp. holarctica (strain FTNF002-00 / FTA).